Reading from the N-terminus, the 410-residue chain is Metacaspase-1B (410 aa).

Positions 1–106 (MYHRNSAPPP…SFGKGAPSNY (106 aa)) are disordered. 2 stretches are compositionally biased toward pro residues: residues 7 to 23 (APPPPGWSGGYPPPQSQ) and 32 to 52 (PPYPPQGPPPPPAHSYSPPPT). Catalysis depends on residues His201 and Cys257.

Belongs to the peptidase C14B family.

Functionally, involved in cell death (apoptosis). The protein is Metacaspase-1B (casB) of Aspergillus clavatus (strain ATCC 1007 / CBS 513.65 / DSM 816 / NCTC 3887 / NRRL 1 / QM 1276 / 107).